Here is a 474-residue protein sequence, read N- to C-terminus: Microtubule protein alp7 (474 aa).

Residues 1–20 (MSDIVSSSTDYSRRSPSSSS) show a composition bias toward low complexity. 3 disordered regions span residues 1-79 (MSDI…DTLN), 93-114 (KSFD…LSQH), and 164-223 (SLQT…NSTQ). At Ser17 the chain carries Phosphoserine. Over residues 25–36 (ETDHTGFHEKRQ) the composition is skewed to basic and acidic residues. A compositionally biased stretch (polar residues) spans 66–76 (SKPNPQLNLKD). Polar residues-rich tracts occupy residues 177–189 (SNGS…NTAP) and 201–223 (RNSA…NSTQ). Coiled-coil stretches lie at residues 219 to 273 (INST…QLRS) and 367 to 471 (KISN…LNLE).

In terms of assembly, interacts with alp14.

It localises to the nucleus. It is found in the cytoplasm. The protein resides in the cytoskeleton. Its subcellular location is the spindle. The protein localises to the chromosome. It localises to the centromere. It is found in the kinetochore. Required for bipolar spindle formation and proper chromosome segregation. Has an indirect role in connecting the kinetochores and the plus end of pole to chromosome microtubules by targeting alp14 to the spindle pole body. Involved in the emergence of large microtubule organizing centers (MTOC) in interphase cells. Attaches to the minus ends of microtubules and associates with the sites of microtubule attachment on the nuclear envelope. This leads to the stabilization of the microtubule bundles. The chain is Microtubule protein alp7 (alp7) from Schizosaccharomyces pombe (strain 972 / ATCC 24843) (Fission yeast).